Here is a 301-residue protein sequence, read N- to C-terminus: Glutamine amidotransferase-like protein GlxB (301 aa).

Residue Cys-2 is part of the active site. The 297-residue stretch at 2-298 folds into the Glutamine amidotransferase type-2 domain; sequence CGIVGLFLKD…PATVYFWDHQ (297 aa).

The polypeptide is Glutamine amidotransferase-like protein GlxB (glxB) (Rhizobium meliloti (strain 1021) (Ensifer meliloti)).